A 120-amino-acid chain; its full sequence is Large ribosomal subunit protein eL18 (120 aa).

The protein belongs to the eukaryotic ribosomal protein eL18 family.

The protein is Large ribosomal subunit protein eL18 of Thermococcus onnurineus (strain NA1).